We begin with the raw amino-acid sequence, 338 residues long: L-lysine 2,3-aminomutase (338 aa).

Residues His107 to Glu330 form the Radical SAM core domain. Residues Cys121, Cys125, and Cys128 each coordinate [4Fe-4S] cluster. Lys333 is modified (N6-(pyridoxal phosphate)lysine).

Belongs to the radical SAM superfamily. KamA family. It depends on [4Fe-4S] cluster as a cofactor. Pyridoxal 5'-phosphate is required as a cofactor.

The enzyme catalyses L-lysine = D-beta-lysine. Functionally, with EpmA is involved in the beta-lysylation step of the post-translational modification of translation elongation factor P (EF-P) on 'Lys-34'. EpmB appears to act before EpmA. Displays lysine 2,3-aminomutase activity, producing (R)-beta-lysine from (S)-alpha-lysine (L-lysine). This chain is L-lysine 2,3-aminomutase (epmB), found in Haemophilus influenzae (strain ATCC 51907 / DSM 11121 / KW20 / Rd).